A 345-amino-acid chain; its full sequence is Heat-inducible transcription repressor HrcA (345 aa).

The protein belongs to the HrcA family.

Negative regulator of class I heat shock genes (grpE-dnaK-dnaJ and groELS operons). Prevents heat-shock induction of these operons. This chain is Heat-inducible transcription repressor HrcA, found in Tetragenococcus halophilus (Pediococcus halophilus).